Reading from the N-terminus, the 491-residue chain is Proline-rich protein PRCC (491 aa).

The mediates interaction with MAD2L2 stretch occupies residues 1–100 (MSLVAYASSD…PPPPGVSPAE (100 aa)). Disordered regions lie at residues 1–244 (MSLV…SPSA), 260–313 (ITQE…PAFQ), and 432–454 (EEKTMKSFSKKKGEQPTGQQRRK). The segment covering 10-26 (DESEPDEAEPEPEEEEA) has biased composition (acidic residues). Positions 40-49 (ASLPAPKGPA) are enriched in low complexity. Over residues 50-96 (LLPPPPQMLAPAFPPPLLLPPPTGDPRLQPPPPLPFGLGGFPPPPGV) the composition is skewed to pro residues. A phosphoserine mark is found at Ser-97, Ser-114, Ser-157, Ser-159, Ser-212, and Ser-218. The segment covering 111–120 (GLPSPRGPGL) has biased composition (low complexity). Over residues 230–244 (APVVGTTTTTPSPSA) the composition is skewed to low complexity. Residue Thr-239 is modified to Phosphothreonine. Phosphoserine occurs at positions 241 and 267. A compositionally biased stretch (acidic residues) spans 262–272 (QEEDDSDEEVA). Residues 287 to 307 (GVEPYPYPIPTVPEELPPGTE) show a composition bias toward pro residues.

In terms of assembly, interacts with MAD2L2; the interaction is direct. As to expression, ubiquitous in fetal and adult tissues.

Its subcellular location is the nucleus. Its function is as follows. May regulate cell cycle progression through interaction with MAD2L2. This chain is Proline-rich protein PRCC (PRCC), found in Homo sapiens (Human).